Consider the following 100-residue polypeptide: Urease subunit gamma (100 aa).

The protein belongs to the urease gamma subunit family. As to quaternary structure, heterotrimer of UreA (gamma), UreB (beta) and UreC (alpha) subunits. Three heterotrimers associate to form the active enzyme.

It localises to the cytoplasm. The enzyme catalyses urea + 2 H2O + H(+) = hydrogencarbonate + 2 NH4(+). It functions in the pathway nitrogen metabolism; urea degradation; CO(2) and NH(3) from urea (urease route): step 1/1. This chain is Urease subunit gamma, found in Methylocella silvestris (strain DSM 15510 / CIP 108128 / LMG 27833 / NCIMB 13906 / BL2).